Reading from the N-terminus, the 465-residue chain is Glutamate--tRNA ligase (465 aa).

The 'HIGH' region motif lies at 11 to 21 (PSPTGYLHIGG). The short motif at 243–247 (KLSKR) is the 'KMSKS' region element. K246 contributes to the ATP binding site.

Belongs to the class-I aminoacyl-tRNA synthetase family. Glutamate--tRNA ligase type 1 subfamily. As to quaternary structure, monomer.

The protein localises to the cytoplasm. It carries out the reaction tRNA(Glu) + L-glutamate + ATP = L-glutamyl-tRNA(Glu) + AMP + diphosphate. Its function is as follows. Catalyzes the attachment of glutamate to tRNA(Glu) in a two-step reaction: glutamate is first activated by ATP to form Glu-AMP and then transferred to the acceptor end of tRNA(Glu). This Aromatoleum aromaticum (strain DSM 19018 / LMG 30748 / EbN1) (Azoarcus sp. (strain EbN1)) protein is Glutamate--tRNA ligase.